A 240-amino-acid chain; its full sequence is Biosynthetic peptidoglycan transglycosylase (240 aa).

The chain crosses the membrane as a helical span at residues 12-31 (ALMWFMVGSVLLVLLLRFVP).

The protein belongs to the glycosyltransferase 51 family.

Its subcellular location is the cell inner membrane. It catalyses the reaction [GlcNAc-(1-&gt;4)-Mur2Ac(oyl-L-Ala-gamma-D-Glu-L-Lys-D-Ala-D-Ala)](n)-di-trans,octa-cis-undecaprenyl diphosphate + beta-D-GlcNAc-(1-&gt;4)-Mur2Ac(oyl-L-Ala-gamma-D-Glu-L-Lys-D-Ala-D-Ala)-di-trans,octa-cis-undecaprenyl diphosphate = [GlcNAc-(1-&gt;4)-Mur2Ac(oyl-L-Ala-gamma-D-Glu-L-Lys-D-Ala-D-Ala)](n+1)-di-trans,octa-cis-undecaprenyl diphosphate + di-trans,octa-cis-undecaprenyl diphosphate + H(+). It functions in the pathway cell wall biogenesis; peptidoglycan biosynthesis. Its function is as follows. Peptidoglycan polymerase that catalyzes glycan chain elongation from lipid-linked precursors. The polypeptide is Biosynthetic peptidoglycan transglycosylase (Pseudomonas fluorescens (strain ATCC BAA-477 / NRRL B-23932 / Pf-5)).